Consider the following 383-residue polypeptide: GTPase-interacting component 2 (383 aa).

A disordered region spans residues 63-106 (SNKKNIELPPLSPNSHPSCHHRRSNSNSAKSKESSSSSSSANKT). A compositionally biased stretch (low complexity) spans 87–105 (NSNSAKSKESSSSSSSANK). The 14-residue stretch at 134-147 (ISTPFDFQHISHAD) folds into the CRIB domain. The segment covering 155 to 165 (EQLQEPSSLST) has biased composition (polar residues). The interval 155 to 189 (EQLQEPSSLSTEIKDDYTSSSSKRDSKSLNKAFVT) is disordered. Positions 166-182 (EIKDDYTSSSSKRDSKS) are enriched in basic and acidic residues. Phosphoserine is present on residues S254, S258, S337, S345, and S367. The tract at residues 319–361 (ETPNSNKDSAKAFFPSRQSPLPKRRNSIATPSPQSKFSYSDSP) is disordered. Residues 345–361 (SIATPSPQSKFSYSDSP) are compositionally biased toward polar residues.

It belongs to the BORG/CEP family. Interacts with GTP-bound CDC42.

It is found in the bud neck. The protein resides in the bud tip. Its subcellular location is the cytoplasm. The protein localises to the cell cortex. It localises to the cytoskeleton. Functionally, required for cell size and shape control, bud site selection, bud emergence, actin cytoskeletal organization, mitotic spindle orientation/positioning, and mating projection formation in response to mating pheromone. This Saccharomyces cerevisiae (strain ATCC 204508 / S288c) (Baker's yeast) protein is GTPase-interacting component 2 (GIC2).